Here is a 519-residue protein sequence, read N- to C-terminus: Circadian clock oscillator protein KaiC (519 aa).

KaiC domains lie at 1 to 246 and 260 to 519; these read MSEK…VNIF and VRVS…GSDS. ATP-binding residues include Gly-48, Thr-49, Gly-50, Lys-51, Thr-52, Leu-53, Lys-223, Leu-224, Arg-225, Thr-227, His-229, Thr-239, Thr-289, Gly-290, Thr-291, Gly-292, Lys-293, Thr-294, and Leu-295. A Mg(2+)-binding site is contributed by Thr-52. Thr-294 is a Mg(2+) binding site. Mg(2+) is bound at residue Glu-317. Trp-330 serves as a coordination point for ATP. Position 430 is a phosphoserine; by autocatalysis (Ser-430). A Phosphothreonine; by autocatalysis modification is found at Thr-431. Positions 450, 456, 457, 458, 460, 462, and 464 each coordinate ATP.

This sequence belongs to the KaiC family. In terms of assembly, homohexamer; hexamerization is dependent on ATP-binding. The KaiABC complex composition changes during the circadian cycle to control KaiC phosphorylation. Complexes KaiC(6), KaiA(2-4):KaiC(6), KaiB(6):KaiC(6) and KaiC(6):KaiB(6):KaiA(12) are among the most important forms, many form cooperatively. KaiC interacts with SasA, activating its autokinase function and leading to RpaA activation. Mg(2+) serves as cofactor. Post-translationally, phosphorylated on serine and threonine residues by autocatalysis. Has a 4 step phosphorylation cycle; the autokinase acts first on Thr-431, then Ser-430. When Ser-430 is modified KaiC switches to an autophosphatase mode, acting first on phospho-Thr-431 then phospho-Ser-430.

It carries out the reaction L-seryl-[protein] + ATP = O-phospho-L-seryl-[protein] + ADP + H(+). The catalysed reaction is L-threonyl-[protein] + ATP = O-phospho-L-threonyl-[protein] + ADP + H(+). It catalyses the reaction ATP + H2O = ADP + phosphate + H(+). With respect to regulation, the interaction with KaiA enhances its phosphorylation status, while the interaction with KaiB decreases it. Its function is as follows. Central component of the KaiABC oscillator complex, which constitutes the main circadian regulator in cyanobacteria. Complex composition changes during the circadian cycle to control KaiC phosphorylation. KaiA stimulates KaiC autophosphorylation, while KaiB sequesters KaiA, leading to KaiC autodephosphorylation. Clock output pathways impact the RpaA transcriptional regulator. KaiC enhances the autophosphorylation activity of SasA, which then transfers its phosphate group to RpaA to activate it. KaiB and KaiC together enhance the phospho-RpaA dephosphatase activity of CikA. In terms of biological role, has a weak, temperature-independent ATPase activity; ATPase activity defines the circadian period. The phosphorylation state of KaiC modulates its ATPase activity and effects KaiB binding. In Nostoc sp. (strain PCC 7120 / SAG 25.82 / UTEX 2576), this protein is Circadian clock oscillator protein KaiC.